The sequence spans 944 residues: Isoleucine--tRNA ligase (944 aa).

Positions 58-68 (PYANGDIHIGH) match the 'HIGH' region motif. Glutamate 568 contributes to the L-isoleucyl-5'-AMP binding site. Residues 609–613 (KMSKS) carry the 'KMSKS' region motif. Lysine 612 provides a ligand contact to ATP. Zn(2+)-binding residues include cysteine 907, cysteine 910, cysteine 927, and cysteine 930.

The protein belongs to the class-I aminoacyl-tRNA synthetase family. IleS type 1 subfamily. Monomer. Zn(2+) is required as a cofactor.

It localises to the cytoplasm. It carries out the reaction tRNA(Ile) + L-isoleucine + ATP = L-isoleucyl-tRNA(Ile) + AMP + diphosphate. In terms of biological role, catalyzes the attachment of isoleucine to tRNA(Ile). As IleRS can inadvertently accommodate and process structurally similar amino acids such as valine, to avoid such errors it has two additional distinct tRNA(Ile)-dependent editing activities. One activity is designated as 'pretransfer' editing and involves the hydrolysis of activated Val-AMP. The other activity is designated 'posttransfer' editing and involves deacylation of mischarged Val-tRNA(Ile). This is Isoleucine--tRNA ligase from Psychromonas ingrahamii (strain DSM 17664 / CCUG 51855 / 37).